Reading from the N-terminus, the 266-residue chain is Inositol-1-monophosphatase (266 aa).

Residues Glu69, Asp86, Leu88, and Asp89 each coordinate Mg(2+). Glu69 provides a ligand contact to substrate. Residues 88–91 (LDGT), Arg185, and Asp214 each bind substrate. Residue Asp214 participates in Mg(2+) binding.

This sequence belongs to the inositol monophosphatase superfamily. Mg(2+) is required as a cofactor.

The enzyme catalyses a myo-inositol phosphate + H2O = myo-inositol + phosphate. In Mesorhizobium japonicum (strain LMG 29417 / CECT 9101 / MAFF 303099) (Mesorhizobium loti (strain MAFF 303099)), this protein is Inositol-1-monophosphatase (suhB).